A 726-amino-acid polypeptide reads, in one-letter code: Catalase-peroxidase (726 aa).

The disordered stretch occupies residues Met-1–Thr-33. Residues Trp-105 to Tyr-226 constitute a cross-link (tryptophyl-tyrosyl-methioninium (Trp-Tyr) (with M-252)). Catalysis depends on His-106, which acts as the Proton acceptor. Residues Tyr-226–Met-252 constitute a cross-link (tryptophyl-tyrosyl-methioninium (Tyr-Met) (with W-105)). His-267 contacts heme b.

The protein belongs to the peroxidase family. Peroxidase/catalase subfamily. In terms of assembly, homodimer or homotetramer. Requires heme b as cofactor. Post-translationally, formation of the three residue Trp-Tyr-Met cross-link is important for the catalase, but not the peroxidase activity of the enzyme.

It catalyses the reaction H2O2 + AH2 = A + 2 H2O. The enzyme catalyses 2 H2O2 = O2 + 2 H2O. Its function is as follows. Bifunctional enzyme with both catalase and broad-spectrum peroxidase activity. The protein is Catalase-peroxidase of Escherichia coli O1:K1 / APEC.